Consider the following 635-residue polypeptide: MERWSINESAKVYNLDNWGADLFSINKKGNICVHPSSNSKNAIDLRALVDDLIKRKIKPPILLRFMDVLQGRIASINRVFRNAIAENDYPAKYQTFYPIKVNQQRQVVEAIASYGKRYNIGLEVGSKPELVAGIAISTGNGLPIICNGYKDAEYIETVLFATRVGYNITIVVEKLFELEKIIELAKKTGIRPSLGIRVKLSSKGTGKWATSGGEDAKFGLRMSEIMAAIKMLQEADLLDCVNLLHSHIGSQVTKIDKIKTALIEAARIYSEMRKLGVNIQYLDIGGGLGVDYDGSKSSYFSSVNYTVEEYANDVIYQIKNICDEAGVDCPNIISESGRATVAHYSVLVTNVLNTNTQNLMPDYEQILEEMEKPAPTVKKLLDIYKSIDRYSLREDYHDTLQLINEAVSLFNLGYLTLQDRAIAEWLYSKIIKKINSIVEKIKPIPEELQNFQLALRQTYFANFSLFQSIPDSWAIDQLFPIMPLQRLGQRPDVMASIADITCDSDGEITSFVGENGRSKFLPMHKLKKDEDYYIGFFLIGAYQEILGDLHNLFGDTNAVHITFNKKTGYMIDTVINGDATWETLKYVQYKGPEILKHVRDNLEKQVAIKKVSIEESSHFIELLDRTLLGYTYLGE.

Lys-100 is subject to N6-(pyridoxal phosphate)lysine. Residue 282–292 participates in substrate binding; the sequence is LDIGGGLGVDY.

Belongs to the Orn/Lys/Arg decarboxylase class-II family. SpeA subfamily. Requires Mg(2+) as cofactor. Pyridoxal 5'-phosphate is required as a cofactor.

It carries out the reaction L-arginine + H(+) = agmatine + CO2. It functions in the pathway amine and polyamine biosynthesis; agmatine biosynthesis; agmatine from L-arginine: step 1/1. Catalyzes the biosynthesis of agmatine from arginine. The polypeptide is Biosynthetic arginine decarboxylase (Trichlorobacter lovleyi (strain ATCC BAA-1151 / DSM 17278 / SZ) (Geobacter lovleyi)).